A 119-amino-acid chain; its full sequence is Large ribosomal subunit protein bL20 (119 aa).

This sequence belongs to the bacterial ribosomal protein bL20 family.

Functionally, binds directly to 23S ribosomal RNA and is necessary for the in vitro assembly process of the 50S ribosomal subunit. It is not involved in the protein synthesizing functions of that subunit. This is Large ribosomal subunit protein bL20 from Clostridium kluyveri (strain NBRC 12016).